Reading from the N-terminus, the 128-residue chain is Small ribosomal subunit protein uS12 (128 aa).

A 3-methylthioaspartic acid modification is found at D89. Residues 101 to 128 (SLDTSGVADRRNGRSKYGAKRPKEGAKK) form a disordered region.

It belongs to the universal ribosomal protein uS12 family. In terms of assembly, part of the 30S ribosomal subunit. Contacts proteins S8 and S17. May interact with IF1 in the 30S initiation complex.

Its function is as follows. With S4 and S5 plays an important role in translational accuracy. Functionally, interacts with and stabilizes bases of the 16S rRNA that are involved in tRNA selection in the A site and with the mRNA backbone. Located at the interface of the 30S and 50S subunits, it traverses the body of the 30S subunit contacting proteins on the other side and probably holding the rRNA structure together. The combined cluster of proteins S8, S12 and S17 appears to hold together the shoulder and platform of the 30S subunit. The chain is Small ribosomal subunit protein uS12 from Chloroherpeton thalassium (strain ATCC 35110 / GB-78).